We begin with the raw amino-acid sequence, 688 residues long: Potassium-transporting ATPase ATP-binding subunit (688 aa).

Helical transmembrane passes span 35–55 (VMFV…QALG), 62–82 (AGFI…ANFA), 219–239 (IALT…IVTL), and 260–280 (VLIA…LSAI). D313 (4-aspartylphosphate intermediate) is an active-site residue. Residues D350, E354, 383–390 (FSAHTRMS), and K401 contribute to the ATP site. Mg(2+) contacts are provided by D524 and D528. The next 3 membrane-spanning stretches (helical) occupy residues 594–614 (FAII…LNVM), 622–642 (AILS…PLAL), and 668–688 (VIVP…VGLA).

The protein belongs to the cation transport ATPase (P-type) (TC 3.A.3) family. Type IA subfamily. The system is composed of three essential subunits: KdpA, KdpB and KdpC.

It localises to the cell inner membrane. It catalyses the reaction K(+)(out) + ATP + H2O = K(+)(in) + ADP + phosphate + H(+). Its function is as follows. Part of the high-affinity ATP-driven potassium transport (or Kdp) system, which catalyzes the hydrolysis of ATP coupled with the electrogenic transport of potassium into the cytoplasm. This subunit is responsible for energy coupling to the transport system and for the release of the potassium ions to the cytoplasm. This Dechloromonas aromatica (strain RCB) protein is Potassium-transporting ATPase ATP-binding subunit.